Consider the following 148-residue polypeptide: SsrA-binding protein (148 aa).

The protein belongs to the SmpB family.

It is found in the cytoplasm. Required for rescue of stalled ribosomes mediated by trans-translation. Binds to transfer-messenger RNA (tmRNA), required for stable association of tmRNA with ribosomes. tmRNA and SmpB together mimic tRNA shape, replacing the anticodon stem-loop with SmpB. tmRNA is encoded by the ssrA gene; the 2 termini fold to resemble tRNA(Ala) and it encodes a 'tag peptide', a short internal open reading frame. During trans-translation Ala-aminoacylated tmRNA acts like a tRNA, entering the A-site of stalled ribosomes, displacing the stalled mRNA. The ribosome then switches to translate the ORF on the tmRNA; the nascent peptide is terminated with the 'tag peptide' encoded by the tmRNA and targeted for degradation. The ribosome is freed to recommence translation, which seems to be the essential function of trans-translation. In Mycoplasma mycoides subsp. mycoides SC (strain CCUG 32753 / NCTC 10114 / PG1), this protein is SsrA-binding protein.